Consider the following 270-residue polypeptide: UPF0354 protein BCG9842_B0431 (270 aa).

Belongs to the UPF0354 family.

This Bacillus cereus (strain G9842) protein is UPF0354 protein BCG9842_B0431.